Consider the following 603-residue polypeptide: Shugoshin (603 aa).

The stretch at 11 to 74 (HIQELQNILD…NVQLRSQVSL (64 aa)) forms a coiled coil. Disordered regions lie at residues 112–164 (ESLP…RSST) and 201–227 (NEIDTNNVNNDNLLSPIPHKKRKSNRR). 2 stretches are compositionally biased toward low complexity: residues 146-157 (SVSTGSAHSTSS) and 201-214 (NEIDTNNVNNDNLL). Basic residues predominate over residues 218–227 (PHKKRKSNRR). Positions 304–325 (KQDILDETEKRDTAVNQKKKLE) form a coiled coil. Residues 331–399 (PVEELSSSKN…ESVDFDRPRR (69 aa)) form a disordered region. A compositionally biased stretch (basic residues) spans 362 to 376 (KVKHSMKSRKPKKNK). A coiled-coil region spans residues 431–451 (NIQDLQVKYKKSKKVLEKELK). A compositionally biased stretch (basic and acidic residues) spans 455–467 (KAMKSPKKNEKTF). Disordered stretches follow at residues 455–519 (KAMK…HSSF) and 583–603 (HNDTNKSSPKTYRSRSRKNKA). Residues 483 to 512 (RPSSTHSTSSVDAECSHNNSHSENINSSIN) show a composition bias toward low complexity. A compositionally biased stretch (polar residues) spans 583–593 (HNDTNKSSPKT). The span at 594-603 (YRSRSRKNKA) shows a compositional bias: basic residues.

The protein belongs to the shugoshin family.

Its subcellular location is the nucleus. The protein localises to the chromosome. It is found in the centromere. In terms of biological role, plays a central role in chromosome cohesion during cell division by preventing premature dissociation of cohesin complex from centromeres after prophase, when most of cohesin complex dissociates from chromosomes arms. The protein is Shugoshin (SGO1) of Candida glabrata (strain ATCC 2001 / BCRC 20586 / JCM 3761 / NBRC 0622 / NRRL Y-65 / CBS 138) (Yeast).